We begin with the raw amino-acid sequence, 283 residues long: Bifunctional protein FolD (283 aa).

NADP(+) contacts are provided by residues 165 to 167, serine 190, and valine 231; that span reads GRS.

It belongs to the tetrahydrofolate dehydrogenase/cyclohydrolase family. As to quaternary structure, homodimer.

The enzyme catalyses (6R)-5,10-methylene-5,6,7,8-tetrahydrofolate + NADP(+) = (6R)-5,10-methenyltetrahydrofolate + NADPH. It carries out the reaction (6R)-5,10-methenyltetrahydrofolate + H2O = (6R)-10-formyltetrahydrofolate + H(+). The protein operates within one-carbon metabolism; tetrahydrofolate interconversion. Its function is as follows. Catalyzes the oxidation of 5,10-methylenetetrahydrofolate to 5,10-methenyltetrahydrofolate and then the hydrolysis of 5,10-methenyltetrahydrofolate to 10-formyltetrahydrofolate. This chain is Bifunctional protein FolD, found in Bacillus pumilus (strain SAFR-032).